Consider the following 288-residue polypeptide: Serine/threonine-protein acetyltransferase YopJ (288 aa).

Residues His-109 and Glu-128 contribute to the active site. A CoA-binding site is contributed by His-109. Position 167-168 (167-168) interacts with CoA; it reads RS. Cys-172 is a catalytic residue. Residues 182-185 and 224-225 each bind 1D-myo-inositol hexakisphosphate; these read KLYI and KH. Position 227 to 230 (227 to 230) interacts with CoA; sequence QGKK. Arg-257 contributes to the 1D-myo-inositol hexakisphosphate binding site. 266-270 serves as a coordination point for CoA; the sequence is DGKEL.

The protein belongs to the acetyltransferase YopJ family. It depends on 1D-myo-inositol hexakisphosphate as a cofactor.

Its subcellular location is the secreted. The enzyme catalyses L-threonyl-[protein] + acetyl-CoA = O-acetyl-L-threonyl-[protein] + CoA. The catalysed reaction is L-seryl-[protein] + acetyl-CoA = O-acetyl-L-seryl-[protein] + CoA. Its activity is regulated as follows. 1D-myo-inositol hexakisphosphate activates protein-acetyltransferase activity via an allosteric mechanism: 1D-myo-inositol hexakisphosphate-binding induces a conformational rearrangement that stimulates the interaction with acetyl-CoA. Serine/threonine-protein acetyltransferase translocated into infected cells, which inhibits the host immune response and induces cell death by mediating acetylation of target proteins. Inhibits the MAPK and NF-kappa-B signaling pathways by acetylating protein-kinases such as MAP2K1, MAP2K6, MAP3K7/TAK1 and I-kappa-B kinase (CHUK/IKKA and IKBKB) on serine and threonine residues critical for their activation by phosphorylation, thereby preventing protein-kinase activation. Promotes pyroptosis, a programmed cell death, in host cells by mediating acetylation of MAP3K7/TAK1: MAP3K7/TAK1 inactivation triggers activation of caspase-8 (CASP8), followed by CASP8-dependent cleavage of gasdermin-D (GSDMD) and induction of pyroptosis. Also able to induce intestinal barrier dysfunction by acetylating and inhibiting host protein-kinases RIPK2/RICK and MAP3K7/TAK1, thereby promoting cell death. In Yersinia pseudotuberculosis serotype I (strain IP32953), this protein is Serine/threonine-protein acetyltransferase YopJ.